We begin with the raw amino-acid sequence, 449 residues long: Tripartite motif-containing protein 64 (449 aa).

Residues 15–56 form an RING-type zinc finger; it reads CCICVNYFIDPVTIDCGHSFCRPCLCLCSEEGRAPMRCPSCR. A B box-type zinc finger spans residues 87–128; sequence SSDNICVLHEETKELFCEADKRLLCGPCSESPEHMAHSHSPI. Residues Cys92, His95, Cys114, and His120 each coordinate Zn(2+). Residues 189 to 225 adopt a coiled-coil conformation; it reads LDEEEQRHLQALEREAEELFQQLQDSQVRMTQHLERM. The 181-residue stretch at 269 to 449 folds into the B30.2/SPRY domain; the sequence is LTSWCITGVL…LRPFFCFGCT (181 aa).

Belongs to the TRIM/RBCC family.

The polypeptide is Tripartite motif-containing protein 64 (TRIM64) (Homo sapiens (Human)).